The sequence spans 475 residues: tRNA-2-methylthio-N(6)-dimethylallyladenosine synthase (475 aa).

The MTTase N-terminal domain occupies 2–119 (AKLHITTWGC…LPEMINKIRG (118 aa)). Residues C11, C48, C82, C156, C160, and C163 each coordinate [4Fe-4S] cluster. The Radical SAM core domain maps to 142 to 374 (RAEGPTAFVS…QQRINHQAMQ (233 aa)). Positions 377-440 (RAMLGTEQRV…TNSLRGDVVR (64 aa)) constitute a TRAM domain.

It belongs to the methylthiotransferase family. MiaB subfamily. As to quaternary structure, monomer. It depends on [4Fe-4S] cluster as a cofactor.

The protein localises to the cytoplasm. The enzyme catalyses N(6)-dimethylallyladenosine(37) in tRNA + (sulfur carrier)-SH + AH2 + 2 S-adenosyl-L-methionine = 2-methylsulfanyl-N(6)-dimethylallyladenosine(37) in tRNA + (sulfur carrier)-H + 5'-deoxyadenosine + L-methionine + A + S-adenosyl-L-homocysteine + 2 H(+). Its function is as follows. Catalyzes the methylthiolation of N6-(dimethylallyl)adenosine (i(6)A), leading to the formation of 2-methylthio-N6-(dimethylallyl)adenosine (ms(2)i(6)A) at position 37 in tRNAs that read codons beginning with uridine. The polypeptide is tRNA-2-methylthio-N(6)-dimethylallyladenosine synthase (Actinobacillus pleuropneumoniae serotype 5b (strain L20)).